The chain runs to 138 residues: Phosphoribosyl-AMP cyclohydrolase (138 aa).

Asp84 provides a ligand contact to Mg(2+). Position 85 (Cys85) interacts with Zn(2+). Residues Asp86 and Asp88 each coordinate Mg(2+). The Zn(2+) site is built by Cys102 and Cys109.

It belongs to the PRA-CH family. As to quaternary structure, homodimer. Mg(2+) serves as cofactor. It depends on Zn(2+) as a cofactor.

The protein resides in the cytoplasm. It catalyses the reaction 1-(5-phospho-beta-D-ribosyl)-5'-AMP + H2O = 1-(5-phospho-beta-D-ribosyl)-5-[(5-phospho-beta-D-ribosylamino)methylideneamino]imidazole-4-carboxamide. The protein operates within amino-acid biosynthesis; L-histidine biosynthesis; L-histidine from 5-phospho-alpha-D-ribose 1-diphosphate: step 3/9. Its function is as follows. Catalyzes the hydrolysis of the adenine ring of phosphoribosyl-AMP. The chain is Phosphoribosyl-AMP cyclohydrolase from Burkholderia vietnamiensis (strain G4 / LMG 22486) (Burkholderia cepacia (strain R1808)).